The chain runs to 115 residues: U3-lycotoxin-Ls1g (115 aa).

The signal sequence occupies residues 1-20; it reads MKFVLLFGVFLVTLFSYSSA. Positions 21 to 44 are excised as a propeptide; sequence EMLDDFDQADEDELLSLIEKEEAR. 4 disulfides stabilise this stretch: Cys-48–Cys-63, Cys-55–Cys-72, Cys-62–Cys-87, and Cys-74–Cys-85.

Belongs to the neurotoxin 19 (CSTX) family. 01 subfamily. As to expression, expressed by the venom gland.

It is found in the secreted. The chain is U3-lycotoxin-Ls1g from Lycosa singoriensis (Wolf spider).